Reading from the N-terminus, the 419-residue chain is tRNA(Ile)-lysidine synthase (419 aa).

An ATP-binding site is contributed by 31–36; it reads SGGGDS.

Belongs to the tRNA(Ile)-lysidine synthase family.

Its subcellular location is the cytoplasm. It carries out the reaction cytidine(34) in tRNA(Ile2) + L-lysine + ATP = lysidine(34) in tRNA(Ile2) + AMP + diphosphate + H(+). In terms of biological role, ligates lysine onto the cytidine present at position 34 of the AUA codon-specific tRNA(Ile) that contains the anticodon CAU, in an ATP-dependent manner. Cytidine is converted to lysidine, thus changing the amino acid specificity of the tRNA from methionine to isoleucine. In Ruegeria pomeroyi (strain ATCC 700808 / DSM 15171 / DSS-3) (Silicibacter pomeroyi), this protein is tRNA(Ile)-lysidine synthase.